Reading from the N-terminus, the 418-residue chain is E3 ubiquitin-protein ligase pellino homolog 1 (418 aa).

In terms of domain architecture, FHA; atypical spans 13–200 (APVKYGELIV…MHPRNGFTED (188 aa)). Residue S121 is modified to Phosphoserine; by ATM. T127 carries the phosphothreonine; by ATM modification. The segment at 311 to 399 (CGHVHGYHNW…TFHAACPFCA (89 aa)) is ring-like domain; necessary for ubiqitination of RIPK3.

This sequence belongs to the pellino family. As to quaternary structure, interacts with MAP3K7. Upon IL1B treatment, forms a complex with TRAF6, IRAK1, IRAK4 and MYD88; this complex recruits MAP3K7/TAK1, TAB1 and TAB2 to mediate NF-kappa-B activation. Direct binding of SMAD6 to PELI1 prevents the complex formation and hence negatively regulates IL1R-TLR signaling and eventually NF-kappa-B-mediated gene expression. Interacts (via atypical FHA domain) with RIPK3; preferentially binds to the 'Thr-182' phosphorylated form of RIPK3. Interacts with RIPK1 and IRAK1. In terms of processing, phosphorylation by IRAK1 and IRAK4 enhances its E3 ligase activity. Phosphorylated by ATM in response to DNA damage, promoting localization to DNA double-strand breaks (DSBs) and ability to mediate 'Lys-63'-linked ubiquitination of NBN. Post-translationally, sumoylated. As to expression, expressed at high levels in normal skin but decreased in keratinocytes from toxic epidermal necrolysis (TEN) patients (at protein level).

It is found in the chromosome. It carries out the reaction S-ubiquitinyl-[E2 ubiquitin-conjugating enzyme]-L-cysteine + [acceptor protein]-L-lysine = [E2 ubiquitin-conjugating enzyme]-L-cysteine + N(6)-ubiquitinyl-[acceptor protein]-L-lysine.. It participates in protein modification; protein ubiquitination. Its function is as follows. E3 ubiquitin ligase catalyzing the covalent attachment of ubiquitin moieties onto substrate proteins. Involved in the TLR and IL-1 signaling pathways via interaction with the complex containing IRAK kinases and TRAF6. Acts as a positive regulator of inflammatory response in microglia through activation of NF-kappa-B and MAP kinase. Mediates 'Lys-63'-linked polyubiquitination of IRAK1 allowing subsequent NF-kappa-B activation. Conjugates 'Lys-63'-linked ubiquitin chains to the adapter protein ASC/PYCARD, which in turn is crucial for NLRP3 inflammasome activation. Mediates 'Lys-48'-linked polyubiquitination of RIPK3 leading to its subsequent proteasome-dependent degradation; preferentially recognizes and mediates the degradation of the 'Thr-182' phosphorylated form of RIPK3. Negatively regulates necroptosis by reducing RIPK3 expression. Mediates 'Lys-63'-linked ubiquitination of RIPK1. Following phosphorylation by ATM, catalyzes 'Lys-63'-linked ubiquitination of NBN, promoting DNA repair via homologous recombination. Negatively regulates activation of the metabolic mTORC1 signaling pathway by mediating 'Lys-63'-linked ubiquitination of mTORC1-inhibitory protein TSC1 and thereby promoting TSC1/TSC2 complex stability. The polypeptide is E3 ubiquitin-protein ligase pellino homolog 1 (Homo sapiens (Human)).